Reading from the N-terminus, the 417-residue chain is Laccase-like protein claX (417 aa).

This sequence belongs to the multicopper oxidase family.

Functionally, laccase-like protein; part of the gene cluster that mediates the biosynthesis of clavilactone A, a meroterpenoid that features a unique benzo-fused ten-membered carbocyclic ring unit with an alpha,beta-epoxy-gamma-lactone moiety, forming an intriguing 10/5/3 tricyclic nested skeleton. ClaR, ClaS and ClaT are sufficient to produce clavilactone A and the function of claX, if any, has still to be identified. The biosynthesis begins with the prenyltransferase claS that transfers geranyl pyrophosphate (GPP) to hydroquinone to produces geranylhydroquinon. The cytochrome P450 monooxygenase claR then catalyzes the diradical coupling reaction between the intramolecular hydroquinone and allyl moieties to form the benzo-fused ten-membered carbocyclic ring unit of wigantol. Finally the cytochrome P450 monooxygenase claT exquisitely and stereoselectively assembles the alpha,beta-epoxy-gamma-lactone moiety, producing clavilactone A via arnebinol A. This is Laccase-like protein claX from Ampulloclitocybe clavipes (Club foot).